Reading from the N-terminus, the 71-residue chain is MPAVKVKENEPFDVALRRFKRSCEKAGVLAEVRSREFYEKPTAERKRKAAAAVKRHAKKVQREQRRSVRLY.

Residues 49–59 (AAAAVKRHAKK) show a composition bias toward basic residues. The disordered stretch occupies residues 49 to 71 (AAAAVKRHAKKVQREQRRSVRLY). A compositionally biased stretch (basic and acidic residues) spans 60 to 71 (VQREQRRSVRLY).

It belongs to the bacterial ribosomal protein bS21 family.

This Stutzerimonas stutzeri (strain A1501) (Pseudomonas stutzeri) protein is Small ribosomal subunit protein bS21.